The following is a 195-amino-acid chain: Thymidine kinase (195 aa).

ATP-binding positions include 15–22 and 88–91; these read GSMFSGKS and DEVQ. Glu-89 acts as the Proton acceptor in catalysis. Residues Cys-145, Cys-148, Cys-183, and Xaa-186 each contribute to the Zn(2+) site.

The protein belongs to the thymidine kinase family. Homotetramer.

It is found in the cytoplasm. It carries out the reaction thymidine + ATP = dTMP + ADP + H(+). The polypeptide is Thymidine kinase (Bacillus cereus (strain ATCC 10987 / NRS 248)).